The chain runs to 330 residues: DNA primase small subunit PriS (330 aa).

Active-site residues include D101 and D103. Zn(2+) contacts are provided by C116, C119, C128, and D131. The active site involves D235.

The protein belongs to the eukaryotic-type primase small subunit family. In terms of assembly, heterodimer of a small subunit (PriS) and a large subunit (PriL). The cofactor is Mg(2+). It depends on Mn(2+) as a cofactor.

Catalytic subunit of DNA primase, an RNA polymerase that catalyzes the synthesis of short RNA molecules used as primers for DNA polymerase during DNA replication. The small subunit contains the primase catalytic core and has DNA synthesis activity on its own. Binding to the large subunit stabilizes and modulates the activity, increasing the rate of DNA synthesis while decreasing the length of the DNA fragments, and conferring RNA synthesis capability. The DNA polymerase activity may enable DNA primase to also catalyze primer extension after primer synthesis. May also play a role in DNA repair. This is DNA primase small subunit PriS from Saccharolobus islandicus (strain Y.N.15.51 / Yellowstone #2) (Sulfolobus islandicus).